A 152-amino-acid polypeptide reads, in one-letter code: Transcriptional repressor NrdR (152 aa).

Residues 3 to 34 fold into a zinc finger; sequence CPYCSYNESKVVDSRSTEDSISIRRRRECLEC. In terms of domain architecture, ATP-cone spans 49 to 139; it reads ILVIKKNLNR…VYRQFKDINT (91 aa).

Belongs to the NrdR family. It depends on Zn(2+) as a cofactor.

In terms of biological role, negatively regulates transcription of bacterial ribonucleotide reductase nrd genes and operons by binding to NrdR-boxes. The chain is Transcriptional repressor NrdR from Clostridium tetani (strain Massachusetts / E88).